A 156-amino-acid polypeptide reads, in one-letter code: Small ribosomal subunit protein uS7 (156 aa).

The protein belongs to the universal ribosomal protein uS7 family. Part of the 30S ribosomal subunit. Contacts proteins S9 and S11.

Functionally, one of the primary rRNA binding proteins, it binds directly to 16S rRNA where it nucleates assembly of the head domain of the 30S subunit. Is located at the subunit interface close to the decoding center, probably blocks exit of the E-site tRNA. In Clostridium botulinum (strain 657 / Type Ba4), this protein is Small ribosomal subunit protein uS7.